Reading from the N-terminus, the 266-residue chain is Putative carbamate hydrolase RutD (266 aa).

The protein belongs to the AB hydrolase superfamily. Hydrolase RutD family.

The catalysed reaction is carbamate + 2 H(+) = NH4(+) + CO2. Functionally, involved in pyrimidine catabolism. May facilitate the hydrolysis of carbamate, a reaction that can also occur spontaneously. This is Putative carbamate hydrolase RutD from Acinetobacter baylyi (strain ATCC 33305 / BD413 / ADP1).